Here is a 1359-residue protein sequence, read N- to C-terminus: Nuclear protein STH1/NPS1 (1359 aa).

S38 bears the Phosphoserine mark. Positions 307 to 383 (LERQQLLEKR…AKQRLAALKS (77 aa)) constitute an HSA domain. Residues 482 to 647 (VSLYNNHLNG…WALLNFVLPK (166 aa)) enclose the Helicase ATP-binding domain. 495–502 (DEMGLGKT) is a binding site for ATP. Residues 597–600 (DEGH) carry the DEGH box motif. The Helicase C-terminal domain maps to 795-956 (LLDRVLPKFK…NKSTAEEQEA (162 aa)). A disordered region spans residues 1090 to 1246 (RERRRLRQNG…TAAKKTKTKS (157 aa)). The span at 1108–1126 (LENTPEASETSLIENNSFT) shows a compositional bias: polar residues. Composition is skewed to basic residues over residues 1143–1154 (RSKRRSSRKKRT) and 1198–1210 (KKKKPKLTVKIKL). The segment covering 1219–1232 (NDGKRAEEKPESKS) has biased composition (basic and acidic residues). Residues 1233–1246 (PAKKTAAKKTKTKS) show a composition bias toward basic residues. In terms of domain architecture, Bromo spans 1257 to 1357 (KLVEEMREQL…EFTDEWFKEH (101 aa)).

The protein belongs to the SNF2/RAD54 helicase family. In terms of assembly, interacts directly with SFH1, CSE4, histones H3, H4 and H2B, and via its N-terminus, with RSC8. Interacts with LDB7, NPL6 and RTT102. Component of the two forms of the RSC complex composed of at least either RSC1 or RSC2, and ARP7, ARP9, LDB7, NPL6, RSC3, RSC30, RSC4, RSC58, RSC6, RSC8, RSC9, SFH1, STH1, HTL1 and probably RTT102. The complexes interact with histone and histone variant components of centromeric chromatin.

The protein localises to the nucleus. It catalyses the reaction ATP + H2O = ADP + phosphate + H(+). In terms of biological role, catalytic component of the chromatin structure-remodeling complex (RSC), which is involved in transcription regulation and nucleosome positioning. RSC is responsible for the transfer of a histone octamer from a nucleosome core particle to naked DNA. The reaction requires ATP and involves an activated RSC-nucleosome intermediate. Remodeling reaction also involves DNA translocation, DNA twist and conformational change. As a reconfigurer of centromeric and flanking nucleosomes, RSC complex is required both for proper kinetochore function in chromosome segregation and, via a PKC1-dependent signaling pathway, for organization of the cellular cytoskeleton. This subunit is the essential ATPase of the complex. It is a DNA translocase capable of nucleosome remodeling. Required for full expression of early meiotic genes. Essential for mitotic growth and repression of CHA1 expression. Also involved in G2 phase control. The protein is Nuclear protein STH1/NPS1 (STH1) of Saccharomyces cerevisiae (strain ATCC 204508 / S288c) (Baker's yeast).